The following is a 578-amino-acid chain: Putative fatty-acid--CoA ligase fadD21 (578 aa).

The protein belongs to the ATP-dependent AMP-binding enzyme family.

This chain is Putative fatty-acid--CoA ligase fadD21 (fadD21), found in Mycobacterium bovis (strain ATCC BAA-935 / AF2122/97).